Here is a 534-residue protein sequence, read N- to C-terminus: Serine/threonine-protein kinase ppk15 (534 aa).

The segment at 1 to 40 is disordered; that stretch reads MDSDSPILPLSNNPPAARTHDHSQRNNHARHVSSSGTTLF. A phosphoserine mark is found at Ser33, Ser56, and Ser60. Residues 85–104 are disordered; it reads FSSEQNPRRPLTKPSEGVHN. Positions 130–458 constitute a Protein kinase domain; it reads YLILDTLGHG…PDQAKNHPFI (329 aa). ATP-binding positions include 136-144 and Lys159; that span reads LGHGTFGQV. Asp257 (proton acceptor) is an active-site residue. The residue at position 291 (Tyr291) is a Phosphotyrosine.

This sequence belongs to the protein kinase superfamily. Ser/Thr protein kinase family.

It localises to the cytoplasm. Its subcellular location is the cytoskeleton. It is found in the microtubule organizing center. The protein resides in the spindle pole body. It carries out the reaction L-seryl-[protein] + ATP = O-phospho-L-seryl-[protein] + ADP + H(+). The catalysed reaction is L-threonyl-[protein] + ATP = O-phospho-L-threonyl-[protein] + ADP + H(+). The sequence is that of Serine/threonine-protein kinase ppk15 (ppk15) from Schizosaccharomyces pombe (strain 972 / ATCC 24843) (Fission yeast).